Reading from the N-terminus, the 517-residue chain is DNA-binding protein (517 aa).

Residues 1-10 show a composition bias toward polar residues; sequence MASRGGNQSS. A disordered region spans residues 1 to 110; that stretch reads MASRGGNQSS…DISQDSEEER (110 aa). Residues 64–80 show a composition bias toward low complexity; sequence VLVSETSRSSLSPERSN. Positions 87–96 are enriched in basic residues; it reads PKKKPRKTKH. Position 180 is a phosphotyrosine; by host (Y180). Residues C269 and H271 each contribute to the Zn(2+) site. The flexible loop stretch occupies residues 282-316; that stretch reads IEMDVASENGQRAMKENPDRAKITQNRWGRNVVQL. Positions 324, 340, 382, 384, 436, and 453 each coordinate Zn(2+). The tract at residues 501–517 is C-terminal arm, DBP binding; that stretch reads VSLPAGHYDSRQNPFDF.

It belongs to the adenoviridae E2A DNA-binding protein family. Homomultimerizes on viral ssDNA bound to pTP. Forms a initiation complex with viral polymerase, pTP and hosts NFIA and POU2F1/OCT1. Interacts with host SRCAP.

Its subcellular location is the host nucleus. Functionally, plays a role in the elongation phase of viral strand displacement replication by unwinding the template in an ATP-independent fashion, employing its capacity to form multimers. Also enhances the rate of initiation. Released from template upon second strand synthesis. Assembles in complex with viral pTP, viral pol, host NFIA and host POU2F1/OCT1 on viral origin of replication. Covers the whole ssDNA genome during synthesis. The complementary strand synthesis induces its relese from DNA template. May inhibit cellular transcription mediated by the interaction between host SRCAP and CBP. In Human adenovirus B serotype 7 (HAdV-7), this protein is DNA-binding protein.